Consider the following 226-residue polypeptide: Ribosomal RNA small subunit methyltransferase G (226 aa).

Residues Gly83, Phe88, 136–137, and Arg152 contribute to the S-adenosyl-L-methionine site; that span reads IE. The interval 199–226 is disordered; the sequence is FSPSQSDPEGSVLKVRGLHGPDGQPHRR.

This sequence belongs to the methyltransferase superfamily. RNA methyltransferase RsmG family.

The protein localises to the cytoplasm. The enzyme catalyses guanosine(527) in 16S rRNA + S-adenosyl-L-methionine = N(7)-methylguanosine(527) in 16S rRNA + S-adenosyl-L-homocysteine. In terms of biological role, specifically methylates the N7 position of guanine in position 527 of 16S rRNA. The polypeptide is Ribosomal RNA small subunit methyltransferase G (Parvibaculum lavamentivorans (strain DS-1 / DSM 13023 / NCIMB 13966)).